We begin with the raw amino-acid sequence, 355 residues long: UDP-N-acetylglucosamine--N-acetylmuramyl-(pentapeptide) pyrophosphoryl-undecaprenol N-acetylglucosamine transferase (355 aa).

Residues 15-17 (TGG), Asn-127, Arg-163, Ser-191, Ile-244, 263-268 (ALTVSE), and Gln-288 each bind UDP-N-acetyl-alpha-D-glucosamine.

It belongs to the glycosyltransferase 28 family. MurG subfamily.

Its subcellular location is the cell inner membrane. The enzyme catalyses di-trans,octa-cis-undecaprenyl diphospho-N-acetyl-alpha-D-muramoyl-L-alanyl-D-glutamyl-meso-2,6-diaminopimeloyl-D-alanyl-D-alanine + UDP-N-acetyl-alpha-D-glucosamine = di-trans,octa-cis-undecaprenyl diphospho-[N-acetyl-alpha-D-glucosaminyl-(1-&gt;4)]-N-acetyl-alpha-D-muramoyl-L-alanyl-D-glutamyl-meso-2,6-diaminopimeloyl-D-alanyl-D-alanine + UDP + H(+). Its pathway is cell wall biogenesis; peptidoglycan biosynthesis. Its function is as follows. Cell wall formation. Catalyzes the transfer of a GlcNAc subunit on undecaprenyl-pyrophosphoryl-MurNAc-pentapeptide (lipid intermediate I) to form undecaprenyl-pyrophosphoryl-MurNAc-(pentapeptide)GlcNAc (lipid intermediate II). This is UDP-N-acetylglucosamine--N-acetylmuramyl-(pentapeptide) pyrophosphoryl-undecaprenol N-acetylglucosamine transferase from Salmonella dublin (strain CT_02021853).